Reading from the N-terminus, the 62-residue chain is Defensin-like protein A (62 aa).

Positions 1 to 26 are cleaved as a signal peptide; it reads MRCVVLFMVSCLLIVLLINHFEEVEA. Cysteine 42 and cysteine 52 are disulfide-bonded.

This sequence belongs to the DEFL family.

The protein localises to the secreted. In terms of biological role, truncated and inactivated form of SCRA, a protein involved in male-mediated self-incompatibility when active. Most A.thaliana cultivars contain such an inactive form and thus, are self-fertiles. This is Defensin-like protein A (SCRA) from Arabidopsis thaliana (Mouse-ear cress).